The following is a 341-amino-acid chain: Probable dual-specificity RNA methyltransferase RlmN (341 aa).

E88 functions as the Proton acceptor in the catalytic mechanism. Residues 94-314 (EGDRATLCIS…ESHGFTCTIR (221 aa)) enclose the Radical SAM core domain. Residues C101 and C325 are joined by a disulfide bond. Residues C108, C112, and C115 each coordinate [4Fe-4S] cluster. Residues 153–154 (GE), S185, 206–208 (SLH), and H282 contribute to the S-adenosyl-L-methionine site. The active-site S-methylcysteine intermediate is C325.

Belongs to the radical SAM superfamily. RlmN family. The cofactor is [4Fe-4S] cluster.

It localises to the cytoplasm. The enzyme catalyses adenosine(2503) in 23S rRNA + 2 reduced [2Fe-2S]-[ferredoxin] + 2 S-adenosyl-L-methionine = 2-methyladenosine(2503) in 23S rRNA + 5'-deoxyadenosine + L-methionine + 2 oxidized [2Fe-2S]-[ferredoxin] + S-adenosyl-L-homocysteine. The catalysed reaction is adenosine(37) in tRNA + 2 reduced [2Fe-2S]-[ferredoxin] + 2 S-adenosyl-L-methionine = 2-methyladenosine(37) in tRNA + 5'-deoxyadenosine + L-methionine + 2 oxidized [2Fe-2S]-[ferredoxin] + S-adenosyl-L-homocysteine. Its function is as follows. Specifically methylates position 2 of adenine 2503 in 23S rRNA and position 2 of adenine 37 in tRNAs. This is Probable dual-specificity RNA methyltransferase RlmN from Porphyromonas gingivalis (strain ATCC BAA-308 / W83).